The sequence spans 332 residues: Mediator of RNA polymerase II transcription subunit 3 (332 aa).

Disordered regions lie at residues 125–206 and 221–242; these read EPVR…PGAT and SPLN…TTPS. The segment covering 132-143 has biased composition (low complexity); the sequence is SPSYRRPSNRSS. The segment covering 144 to 153 has biased composition (polar residues); sequence ADTPSSNAPT. 2 stretches are compositionally biased toward low complexity: residues 155–166 and 184–200; these read SAAVVSGAALVA and PSVS…SGPA.

The protein belongs to the Mediator complex subunit 3 family. In terms of assembly, component of the Mediator complex.

Its subcellular location is the nucleus. Functionally, component of the Mediator complex, a coactivator involved in regulated gene transcription of nearly all RNA polymerase II-dependent genes. Mediator functions as a bridge to convey information from gene-specific regulatory proteins to the basal RNA polymerase II transcription machinery. Mediator is recruited to promoters by direct interactions with regulatory proteins and serves as a scaffold for the assembly of a functional preinitiation complex with RNA polymerase II and the general transcription factors. This is Mediator of RNA polymerase II transcription subunit 3 (PGD1) from Eremothecium gossypii (strain ATCC 10895 / CBS 109.51 / FGSC 9923 / NRRL Y-1056) (Yeast).